Here is a 172-residue protein sequence, read N- to C-terminus: MNQDHPECDSEELTQNSPETDPLKVEVETLRGEIASIKADVLRERAELENQRKRLIRDVEQARKFANEKLLGELLPVFDSLDAGLTASGSEPSPLRDGLELTYKQLLKVAIDNGLMLLDPVGQLFNPEHHQAISQTEVTDVEPGHVIQVFQKGYLLNERLLRPALVVVAKQD.

Residues 1-23 (MNQDHPECDSEELTQNSPETDPL) are disordered.

Belongs to the GrpE family. In terms of assembly, homodimer.

The protein resides in the cytoplasm. Participates actively in the response to hyperosmotic and heat shock by preventing the aggregation of stress-denatured proteins, in association with DnaK and GrpE. It is the nucleotide exchange factor for DnaK and may function as a thermosensor. Unfolded proteins bind initially to DnaJ; upon interaction with the DnaJ-bound protein, DnaK hydrolyzes its bound ATP, resulting in the formation of a stable complex. GrpE releases ADP from DnaK; ATP binding to DnaK triggers the release of the substrate protein, thus completing the reaction cycle. Several rounds of ATP-dependent interactions between DnaJ, DnaK and GrpE are required for fully efficient folding. The polypeptide is Protein GrpE (Xylella fastidiosa (strain M23)).